Here is a 208-residue protein sequence, read N- to C-terminus: Ribosomal RNA large subunit methyltransferase E (208 aa).

S-adenosyl-L-methionine is bound by residues G63, W65, D83, D99, and D124. K164 acts as the Proton acceptor in catalysis.

It belongs to the class I-like SAM-binding methyltransferase superfamily. RNA methyltransferase RlmE family.

Its subcellular location is the cytoplasm. It carries out the reaction uridine(2552) in 23S rRNA + S-adenosyl-L-methionine = 2'-O-methyluridine(2552) in 23S rRNA + S-adenosyl-L-homocysteine + H(+). In terms of biological role, specifically methylates the uridine in position 2552 of 23S rRNA at the 2'-O position of the ribose in the fully assembled 50S ribosomal subunit. In Hamiltonella defensa subsp. Acyrthosiphon pisum (strain 5AT), this protein is Ribosomal RNA large subunit methyltransferase E.